A 327-amino-acid chain; its full sequence is Malate dehydrogenase (327 aa).

11 to 17 (GAAGQIS) provides a ligand contact to NAD(+). Positions 92 and 98 each coordinate substrate. NAD(+) is bound by residues N105, Q112, and 129–131 (VGN). 2 residues coordinate substrate: N131 and R162. Residue H187 is the Proton acceptor of the active site.

This sequence belongs to the LDH/MDH superfamily. MDH type 2 family.

It carries out the reaction (S)-malate + NAD(+) = oxaloacetate + NADH + H(+). Functionally, catalyzes the reversible oxidation of malate to oxaloacetate. This is Malate dehydrogenase from Nitrosomonas europaea (strain ATCC 19718 / CIP 103999 / KCTC 2705 / NBRC 14298).